The primary structure comprises 261 residues: CD40 ligand (261 aa).

Topologically, residues 1-22 are cytoplasmic; the sequence is MIETYSQPSPRSVAAGPPVSMK. A helical; Signal-anchor for type II membrane protein membrane pass occupies residues 23–43; the sequence is IFMYLLTVFLITQMIGSALFA. The Extracellular portion of the chain corresponds to 44-240; the sequence is AYLHRRLDKI…LQPGASVFVN (197 aa). The region spanning 122-261 is the THD domain; the sequence is IAAHVISEAS…GFTSFGLLKL (140 aa). Cysteines 178 and 218 form a disulfide. An N-linked (GlcNAc...) asparagine glycan is attached at asparagine 240.

Belongs to the tumor necrosis factor family. As to quaternary structure, homotrimer. Interacts with CD28. CD40 ligand, soluble form: Exists as either a monomer or a homotrimer. Forms a ternary complex between CD40 and integrins for CD40-CD40LG signaling. The soluble form derives from the membrane form by proteolytic processing.

The protein resides in the cell membrane. It localises to the cell surface. The protein localises to the secreted. Cytokine that acts as a ligand to CD40/TNFRSF5. Costimulates T-cell proliferation and cytokine production. Its cross-linking on T-cells generates a costimulatory signal which enhances the production of IL4 and IL10 in conjunction with the TCR/CD3 ligation and CD28 costimulation. Induces the activation of NF-kappa-B. Induces the activation of kinases MAPK8 and PAK2 in T-cells. Mediates B-cell proliferation in the absence of co-stimulus as well as IgE production in the presence of IL4. Involved in immunoglobulin class switching. In terms of biological role, acts as a ligand for integrins, specifically ITGA5:ITGB1 and ITGAV:ITGB3; both integrins and the CD40 receptor are required for activation of CD40-CD40LG signaling, which have cell-type dependent effects, such as B-cell activation, NF-kappa-B signaling and anti-apoptotic signaling. The sequence is that of CD40 ligand (CD40LG) from Sus scrofa (Pig).